Reading from the N-terminus, the 500-residue chain is Serine carboxypeptidase 3 (500 aa).

A signal peptide spans 1–21 (MATTPRLASLLLLLALCAAAA). A propeptide spanning residues 22 to 73 (GALRLPPDASFPGAQAERLIRALNLLPGRPRRGLGAGAEDVAPGQLLERRVT) is cleaved from the precursor. Intrachain disulfides connect cysteine 126-cysteine 366, cysteine 294-cysteine 309, and cysteine 332-cysteine 337. Residue asparagine 144 is glycosylated (N-linked (GlcNAc...) asparagine). The active site involves serine 216. The active site involves aspartate 404. Substrate is bound at residue cysteine 407. Histidine 461 is an active-site residue. A propeptide spanning residues 485 to 500 (ESVPEEEPATTFYAAI) is cleaved from the precursor.

This sequence belongs to the peptidase S10 family. Monomer.

The enzyme catalyses Release of a C-terminal amino acid with broad specificity.. The protein is Serine carboxypeptidase 3 (CBP3) of Triticum aestivum (Wheat).